Here is a 53-residue protein sequence, read N- to C-terminus: uncharacterized protein (53 aa).

This is an uncharacterized protein from Saccharomyces cerevisiae (strain ATCC 204508 / S288c) (Baker's yeast).